The primary structure comprises 328 residues: D-cysteine desulfhydrase (328 aa).

At Lys51 the chain carries N6-(pyridoxal phosphate)lysine.

It belongs to the ACC deaminase/D-cysteine desulfhydrase family. Homodimer. Pyridoxal 5'-phosphate is required as a cofactor.

It carries out the reaction D-cysteine + H2O = hydrogen sulfide + pyruvate + NH4(+) + H(+). Functionally, catalyzes the alpha,beta-elimination reaction of D-cysteine and of several D-cysteine derivatives. It could be a defense mechanism against D-cysteine. The chain is D-cysteine desulfhydrase from Shigella sonnei (strain Ss046).